Consider the following 430-residue polypeptide: DNA-binding protein cre-1 (430 aa).

The span at 1 to 19 shows a compositional bias: polar residues; sequence MQRVQSAVDFSNLLNPSES. Disordered stretches follow at residues 1–77, 97–187, 265–340, and 357–430; these read MQRV…LPRP, IRTH…PHSY, SRSH…RNLS, and LDGQ…MDRL. The span at 30 to 46 shows a compositional bias: low complexity; the sequence is PRQQTAQPQQQQQQPQP. 2 consecutive C2H2-type zinc fingers follow at residues 78–100 and 106–130; these read YKCPLCDKAFHRLEHQTRHIRTH and HACQFPGCSKKFSRSDELTRHSRIH. Residues 97 to 106 show a composition bias toward basic and acidic residues; that stretch reads IRTHTGEKPH. Polar residues-rich tracts occupy residues 130–147 and 175–187; these read HSNPNSRRGNKGQQQQQH and AMSSPNVSPPHSY. Positions 268 to 277 are enriched in basic and acidic residues; sequence HSHEDHDDHY. Over residues 289 to 303 the composition is skewed to low complexity; sequence PNSPNSTAPSSPTFS. Polar residues predominate over residues 412–422; it reads SVRNSSSTSLS.

It belongs to the creA/MIG C2H2-type zinc-finger protein family.

The protein localises to the nucleus. Involved in carbon catabolite repression. Represses the transcription of a number of genes by binding to a GC-rich region in their promoter. This chain is DNA-binding protein cre-1 (cre-1), found in Neurospora crassa (strain ATCC 24698 / 74-OR23-1A / CBS 708.71 / DSM 1257 / FGSC 987).